A 132-amino-acid polypeptide reads, in one-letter code: DNA-directed RNA polymerase subunit omega (132 aa).

This sequence belongs to the RNA polymerase subunit omega family. As to quaternary structure, the RNAP catalytic core consists of 2 alpha, 1 beta, 1 beta' and 1 omega subunit. When a sigma factor is associated with the core the holoenzyme is formed, which can initiate transcription.

It catalyses the reaction RNA(n) + a ribonucleoside 5'-triphosphate = RNA(n+1) + diphosphate. Promotes RNA polymerase assembly. Latches the N- and C-terminal regions of the beta' subunit thereby facilitating its interaction with the beta and alpha subunits. The protein is DNA-directed RNA polymerase subunit omega of Ehrlichia ruminantium (strain Welgevonden).